The following is a 458-amino-acid chain: Glycogen synthase (458 aa).

Lysine 15 is an ADP-alpha-D-glucose binding site.

This sequence belongs to the glycosyltransferase 1 family. Bacterial/plant glycogen synthase subfamily.

It carries out the reaction [(1-&gt;4)-alpha-D-glucosyl](n) + ADP-alpha-D-glucose = [(1-&gt;4)-alpha-D-glucosyl](n+1) + ADP + H(+). The protein operates within glycan biosynthesis; glycogen biosynthesis. In terms of biological role, synthesizes alpha-1,4-glucan chains using ADP-glucose. The chain is Glycogen synthase from Gloeobacter violaceus (strain ATCC 29082 / PCC 7421).